The chain runs to 408 residues: Potassium channel subfamily K member 13 (408 aa).

Over 1 to 19 (MAGRGFSWGPGHLNEDNAR) the chain is Cytoplasmic. Residues 20–40 (FLLLAALIVLYLLGGAAVFSA) traverse the membrane as a helical segment. Residues Asn59 and Asn65 are each glycosylated (N-linked (GlcNAc...) asparagine). The pore-forming intramembrane region spans 95–115 (WDFTGAFYFVGTVVSTIGFGM). Thr110, Ile111, and Gly112 together coordinate K(+). The interval 110-115 (TIGFGM) is selectivity filter 1. The helical transmembrane segment at 125 to 145 (IFLIFYGLVGCSSTILFFNLF) threads the bilayer. Residues 146 to 193 (LERLITIIAYIMKSCHQRQLRRRGALPQESLKDAGQCEVDSLAGWKPS) lie on the Cytoplasmic side of the membrane. The helical transmembrane segment at 194–214 (VYYVMLILCTASILISCCASA) threads the bilayer. Positions 224 to 244 (YFDSLYFCFVAFSTIGFGDLV) form an intramembrane region, pore-forming. Residues Thr237, Ile238, Gly239, and Phe240 each coordinate K(+). The interval 237–242 (TIGFGD) is selectivity filter 2. A helical transmembrane segment spans residues 263–283 (VFILMGVCCIYSLFNVISILI). The Cytoplasmic segment spans residues 284–408 (KQSLNWILRK…NRLAETSGDR (125 aa)).

The protein belongs to the two pore domain potassium channel (TC 1.A.1.8) family. Homodimer. Heterodimer with KCNK12. As to expression, expressed in microglia (at protein level).

It is found in the cell membrane. It catalyses the reaction K(+)(in) = K(+)(out). With respect to regulation, the channel conductance is activated by arachidonic acid and inhibited by Ba(2+) ions, volatile anesthetics such as halothane and antiarrhythmic drugs mexiletine and lidocaine. Insensitive to extracellular pH change. Its function is as follows. K(+) channel that conducts outward rectifying tonic currents potentiated by purinergic signals. Homo- and heterodimerizes to form functional channels with distinct regulatory and gating properties. Contributes most of K(+) currents at the plasma membrane of resting microglia. Maintains a depolarized membrane potential required for proper ramified microglia morphology and phagocytosis, selectively mediating microglial pruning of presynaptic compartments at hippocampal excitatory synapses. Upon local release of ATP caused by neuronal injury or infection, it is potentiated by P2RY12 and P2RX7 receptor signaling and contributes to ATP-triggered K(+) efflux underlying microglial NLRP3 inflammasome assembly and IL1B release. The sequence is that of Potassium channel subfamily K member 13 from Homo sapiens (Human).